Consider the following 244-residue polypeptide: uncharacterized protein (244 aa).

The tract at residues 30 to 49 (RETNESPKSQNPSEEATTVN) is disordered. Residues 35–49 (SPKSQNPSEEATTVN) show a composition bias toward polar residues. 4 consecutive transmembrane segments (helical) span residues 96-116 (LWGTCVILSTLFWSYYVLSNS), 128-148 (LLFILIIALDALLTVSLFGLF), 171-191 (GFFINVLSTMVQALVTVTIAF), and 194-214 (FVTIDFPIYVFSSLFLYHPLS). The interval 224-244 (QLDGSGERKTDSSLVHQNPPN) is disordered. Residues 235-244 (SSLVHQNPPN) show a composition bias toward polar residues.

It localises to the nucleus membrane. This is an uncharacterized protein from Schizosaccharomyces pombe (strain 972 / ATCC 24843) (Fission yeast).